Reading from the N-terminus, the 490-residue chain is UDP-glycosyltransferase 86A1 (490 aa).

UDP-alpha-D-glucose contacts are provided by residues Ser-294, 352–354 (CCQ), 369–377 (HCGWNSILE), and 391–394 (LTDQ).

The protein belongs to the UDP-glycosyltransferase family.

The chain is UDP-glycosyltransferase 86A1 (UGT86A1) from Arabidopsis thaliana (Mouse-ear cress).